Reading from the N-terminus, the 111-residue chain is Translation initiation factor 1A (111 aa).

Residues 12 to 86 enclose the S1-like domain; it reads GEMPLPSEDE…KKGEVVYRYL (75 aa).

Belongs to the eIF-1A family.

Its function is as follows. Seems to be required for maximal rate of protein biosynthesis. Enhances ribosome dissociation into subunits and stabilizes the binding of the initiator Met-tRNA(I) to 40 S ribosomal subunits. In Aeropyrum pernix (strain ATCC 700893 / DSM 11879 / JCM 9820 / NBRC 100138 / K1), this protein is Translation initiation factor 1A (eIF1A).